Reading from the N-terminus, the 211-residue chain is MVDVITIPATLRTEFGKGYARRVRANDKIPAVIYGHGAEPLHVILPGHEMMLASRNSNAVLDINVDGEGHLAMIKEVQRHAVRPEILHIDLLTVRRGERVEVEIPVHVEGEVAPTAIHNVEENVLVVEADALKVPEYLTVDITDLEVGEHVYAKDVTLPGNVTLVSDPELLVVNVSEPVEQDLGEESETEEEGAEGEKPAESTGEEPGDDE.

A disordered region spans residues 175–211 (VSEPVEQDLGEESETEEEGAEGEKPAESTGEEPGDDE). The span at 179–194 (VEQDLGEESETEEEGA) shows a compositional bias: acidic residues.

It belongs to the bacterial ribosomal protein bL25 family. CTC subfamily. Part of the 50S ribosomal subunit; part of the 5S rRNA/L5/L18/L25 subcomplex. Contacts the 5S rRNA. Binds to the 5S rRNA independently of L5 and L18.

This is one of the proteins that binds to the 5S RNA in the ribosome where it forms part of the central protuberance. The protein is Large ribosomal subunit protein bL25 of Kocuria rhizophila (strain ATCC 9341 / DSM 348 / NBRC 103217 / DC2201).